We begin with the raw amino-acid sequence, 119 residues long: Large ribosomal subunit protein uL18 (119 aa).

The protein belongs to the universal ribosomal protein uL18 family. In terms of assembly, part of the 50S ribosomal subunit; part of the 5S rRNA/L5/L18/L25 subcomplex. Contacts the 5S and 23S rRNAs.

In terms of biological role, this is one of the proteins that bind and probably mediate the attachment of the 5S RNA into the large ribosomal subunit, where it forms part of the central protuberance. The protein is Large ribosomal subunit protein uL18 of Paracoccus denitrificans (strain Pd 1222).